Consider the following 146-residue polypeptide: Anti-sigma F factor (146 aa).

Belongs to the anti-sigma-factor family.

It catalyses the reaction L-seryl-[protein] + ATP = O-phospho-L-seryl-[protein] + ADP + H(+). The catalysed reaction is L-threonyl-[protein] + ATP = O-phospho-L-threonyl-[protein] + ADP + H(+). Functionally, binds to sigma F and blocks its ability to form an RNA polymerase holoenzyme (E-sigma F). Phosphorylates SpoIIAA on a serine residue. This phosphorylation may enable SpoIIAA to act as an anti-anti-sigma factor that counteracts SpoIIAB and thus releases sigma F from inhibition. This chain is Anti-sigma F factor, found in Oceanobacillus iheyensis (strain DSM 14371 / CIP 107618 / JCM 11309 / KCTC 3954 / HTE831).